We begin with the raw amino-acid sequence, 122 residues long: UPF0102 protein CPE1705 (122 aa).

The protein belongs to the UPF0102 family.

This Clostridium perfringens (strain 13 / Type A) protein is UPF0102 protein CPE1705.